The sequence spans 253 residues: tRNA (guanine-N(1)-)-methyltransferase (253 aa).

Residues Gly116 and 136–141 (VGDYIL) each bind S-adenosyl-L-methionine.

Belongs to the RNA methyltransferase TrmD family. Homodimer.

Its subcellular location is the cytoplasm. The enzyme catalyses guanosine(37) in tRNA + S-adenosyl-L-methionine = N(1)-methylguanosine(37) in tRNA + S-adenosyl-L-homocysteine + H(+). Specifically methylates guanosine-37 in various tRNAs. This is tRNA (guanine-N(1)-)-methyltransferase from Colwellia psychrerythraea (strain 34H / ATCC BAA-681) (Vibrio psychroerythus).